The primary structure comprises 525 residues: Probable pectinesterase/pectinesterase inhibitor 44 (525 aa).

Residues 1 to 19 form the signal peptide; it reads MSCLKYFLILLMLGLCVSS. Residues 30-153 form a pectinesterase inhibitor 44 region; it reads VPASEFVSSI…YSMLRELLPL (124 aa). N-linked (GlcNAc...) asparagine glycosylation occurs at N98. The interval 157-192 is disordered; it reads EQKPKAVSKPGPIAKGPKAPPGRKLRDTDEDESLQF. The pectinesterase 44 stretch occupies residues 212-509; the sequence is DVSVALDGTG…FTVSQFIKGN (298 aa). Residues N222 and N278 are each glycosylated (N-linked (GlcNAc...) asparagine). Residues T287 and Q317 each coordinate substrate. D340 serves as the catalytic Proton donor; for pectinesterase activity. Residues C354 and C374 are joined by a disulfide bond. The Nucleophile; for pectinesterase activity role is filled by D361. N409 and N421 each carry an N-linked (GlcNAc...) asparagine glycan. Positions 429 and 431 each coordinate substrate. Residues N443, N492, and N499 are each glycosylated (N-linked (GlcNAc...) asparagine).

The protein in the N-terminal section; belongs to the PMEI family. In the C-terminal section; belongs to the pectinesterase family. Expressed in siliques.

The protein resides in the secreted. It localises to the cell wall. It catalyses the reaction [(1-&gt;4)-alpha-D-galacturonosyl methyl ester](n) + n H2O = [(1-&gt;4)-alpha-D-galacturonosyl](n) + n methanol + n H(+). Its pathway is glycan metabolism; pectin degradation; 2-dehydro-3-deoxy-D-gluconate from pectin: step 1/5. Acts in the modification of cell walls via demethylesterification of cell wall pectin. The polypeptide is Probable pectinesterase/pectinesterase inhibitor 44 (PME44) (Arabidopsis thaliana (Mouse-ear cress)).